The following is a 380-amino-acid chain: Cytochrome b (380 aa).

4 consecutive transmembrane segments (helical) span residues 34 to 54 (FGSL…LLAM), 78 to 99 (WLIR…YLHI), 114 to 134 (WNIG…GYVL), and 179 to 199 (FFAL…VHLT). His84 and His98 together coordinate heme b. Heme b contacts are provided by His183 and His197. His202 is a binding site for a ubiquinone. The next 4 membrane-spanning stretches (helical) occupy residues 227–247 (IKDM…ALFS), 289–309 (LGGV…PLLH), 321–341 (LLPF…WVGS), and 348–368 (FIII…VLFP).

It belongs to the cytochrome b family. The cytochrome bc1 complex contains 11 subunits: 3 respiratory subunits (MT-CYB, CYC1 and UQCRFS1), 2 core proteins (UQCRC1 and UQCRC2) and 6 low-molecular weight proteins (UQCRH/QCR6, UQCRB/QCR7, UQCRQ/QCR8, UQCR10/QCR9, UQCR11/QCR10 and a cleavage product of UQCRFS1). This cytochrome bc1 complex then forms a dimer. Requires heme b as cofactor.

Its subcellular location is the mitochondrion inner membrane. Component of the ubiquinol-cytochrome c reductase complex (complex III or cytochrome b-c1 complex) that is part of the mitochondrial respiratory chain. The b-c1 complex mediates electron transfer from ubiquinol to cytochrome c. Contributes to the generation of a proton gradient across the mitochondrial membrane that is then used for ATP synthesis. The chain is Cytochrome b (MT-CYB) from Gymnorhina tibicen (Australian magpie).